A 383-amino-acid chain; its full sequence is MTIGIDKISFFVPPYYIDMTALAEARNVDPGKFHIGIGQDQMAVNPISQDIVTFAANAAEAILTKEDKEAIDMVIVGTESSIDESKAAAVVLHRLMGIQPFARSFEIKEACYGATAGLQLAKNHVALHPDKKVLVVAADIAKYGLNSGGEPTQGAGAVAMLVASEPRILALKEDNVMLTQDIYDFWRPTGHPYPMVDGPLSNETYIQSFAQVWDEHKKRTGLDFADYDALAFHIPYTKMGKKALLAKISDQTEAEQERILARYEESIIYSRRVGNLYTGSLYLGLISLLENATTLTAGNQIGLFSYGSGAVAEFFTGELVAGYQNHLQKETHLALLDNRTELSIAEYEAMFAETLDTDIDQTLEDELKYSISAINNTVRSYRN.

Residue aspartate 29 coordinates (3S)-3-hydroxy-3-methylglutaryl-CoA. Residue glutamate 79 is the Proton donor/acceptor of the active site. 7 residues coordinate (3S)-3-hydroxy-3-methylglutaryl-CoA: cysteine 111, threonine 152, serine 201, histidine 233, lysine 242, asparagine 275, and serine 308. The Acyl-thioester intermediate role is filled by cysteine 111. The active-site Proton donor/acceptor is histidine 233.

This sequence belongs to the thiolase-like superfamily. HMG-CoA synthase family. In terms of assembly, homodimer.

It catalyses the reaction acetoacetyl-CoA + acetyl-CoA + H2O = (3S)-3-hydroxy-3-methylglutaryl-CoA + CoA + H(+). It participates in metabolic intermediate biosynthesis; (R)-mevalonate biosynthesis; (R)-mevalonate from acetyl-CoA: step 2/3. Its activity is regulated as follows. Is sensitive to feedback substrate inhibition by acetoacetyl-CoA. Is inactivated by hymeglusin, which also blocks the growth of E.faecalis, indicating the critical role that the mevalonate pathway plays in isoprenoid biosynthesis. Its function is as follows. Catalyzes the condensation of acetyl-CoA with acetoacetyl-CoA to form 3-hydroxy-3-methylglutaryl-CoA (HMG-CoA). Functions in the mevalonate (MVA) pathway leading to isopentenyl diphosphate (IPP), a key precursor for the biosynthesis of isoprenoid compounds. In Enterococcus faecalis (Streptococcus faecalis), this protein is Hydroxymethylglutaryl-CoA synthase (mvaS).